A 752-amino-acid polypeptide reads, in one-letter code: Ribosomal RNA large subunit methyltransferase K/L (752 aa).

The THUMP domain maps to 53–164 (QMYKICLWTR…RDELHISIDL (112 aa)).

Belongs to the methyltransferase superfamily. RlmKL family.

The protein resides in the cytoplasm. The enzyme catalyses guanosine(2445) in 23S rRNA + S-adenosyl-L-methionine = N(2)-methylguanosine(2445) in 23S rRNA + S-adenosyl-L-homocysteine + H(+). It catalyses the reaction guanosine(2069) in 23S rRNA + S-adenosyl-L-methionine = N(2)-methylguanosine(2069) in 23S rRNA + S-adenosyl-L-homocysteine + H(+). In terms of biological role, specifically methylates the guanine in position 2445 (m2G2445) and the guanine in position 2069 (m7G2069) of 23S rRNA. The sequence is that of Ribosomal RNA large subunit methyltransferase K/L from Saccharophagus degradans (strain 2-40 / ATCC 43961 / DSM 17024).